Here is a 198-residue protein sequence, read N- to C-terminus: Glycerol-3-phosphate acyltransferase (198 aa).

Transmembrane regions (helical) follow at residues 4-24 (TYLLFIVAYLLGSIPFALVVG), 71-91 (LPMIFGLDIHPLWFGLAAVLG), 113-133 (LLCYSPVVFAILAVVFFTLLF), and 147-167 (VVAVIASIVSGDKIFIIAMCL).

Belongs to the PlsY family. Probably interacts with PlsX.

It is found in the cell membrane. The enzyme catalyses an acyl phosphate + sn-glycerol 3-phosphate = a 1-acyl-sn-glycero-3-phosphate + phosphate. Its pathway is lipid metabolism; phospholipid metabolism. Its function is as follows. Catalyzes the transfer of an acyl group from acyl-phosphate (acyl-PO(4)) to glycerol-3-phosphate (G3P) to form lysophosphatidic acid (LPA). This enzyme utilizes acyl-phosphate as fatty acyl donor, but not acyl-CoA or acyl-ACP. This chain is Glycerol-3-phosphate acyltransferase, found in Bacillus cereus (strain G9842).